We begin with the raw amino-acid sequence, 259 residues long: MLPTTSVSPRSPDNGILSPREAARHTAGAKRYKYLRRLFHFKQMDFEFALWQMLYLFTSPQKVYRNFHYRKQTKDQWARDDPAFLVLLSIWLCVSTVGFGFVLDMSFFETFKLLLWVVFIDCVGVGLLIATLMWFVSNKYMVKRQGKDYDVEWGYTFDVHLNAFYPLLVILHFIQLFFINHVILSGWFIGYFVGNTIWLIAIGYYIYITFLGYSALPFLKNTVILLYPFAALALLYVLSLALGWNFTEKLCLFYKYRVR.

The Cytoplasmic portion of the chain corresponds to 1–82 (MLPTTSVSPR…TKDQWARDDP (82 aa)). The helical transmembrane segment at 83–103 (AFLVLLSIWLCVSTVGFGFVL) threads the bilayer. The Lumenal segment spans residues 104–112 (DMSFFETFK). Residues 113–133 (LLLWVVFIDCVGVGLLIATLM) form a helical membrane-spanning segment. Topologically, residues 134–158 (WFVSNKYMVKRQGKDYDVEWGYTFD) are cytoplasmic. A helical transmembrane segment spans residues 159–179 (VHLNAFYPLLVILHFIQLFFI). Topologically, residues 180-181 (NH) are lumenal. The helical transmembrane segment at 182–202 (VILSGWFIGYFVGNTIWLIAI) threads the bilayer. The Cytoplasmic portion of the chain corresponds to 203–222 (GYYIYITFLGYSALPFLKNT). The chain crosses the membrane as a helical span at residues 223–243 (VILLYPFAALALLYVLSLALG). Topologically, residues 244–259 (WNFTEKLCLFYKYRVR) are lumenal.

The protein belongs to the unc-50 family.

Its subcellular location is the nucleus inner membrane. It localises to the golgi apparatus membrane. Functionally, involved in the cell surface expression of neuronal nicotinic receptors. Binds RNA. The protein is Protein unc-50 homolog A (unc50-a) of Xenopus laevis (African clawed frog).